The following is a 140-amino-acid chain: uncharacterized protein (140 aa).

This is an uncharacterized protein from Neurospora crassa (strain ATCC 24698 / 74-OR23-1A / CBS 708.71 / DSM 1257 / FGSC 987).